The primary structure comprises 92 residues: Beta-2-microglobulin (92 aa).

Residues 2 to 91 form the Ig-like C1-type domain; it reads PQIQVYTRHP…VSMKEPKTVN (90 aa). An intrachain disulfide couples Cys22 to Cys77.

Belongs to the beta-2-microglobulin family. Heterodimer of an alpha chain and a beta chain. Beta-2-microglobulin is the beta-chain of major histocompatibility complex class I molecules.

It localises to the secreted. Functionally, component of the class I major histocompatibility complex (MHC). Involved in the presentation of peptide antigens to the immune system. The polypeptide is Beta-2-microglobulin (B2m) (Mus caroli (Ryukyu mouse)).